The chain runs to 359 residues: Ribosomal RNA small subunit methyltransferase H (359 aa).

Residues 39–41, D58, F87, D108, and Q115 contribute to the S-adenosyl-L-methionine site; that span reads AGH. Positions 339–359 are disordered; that stretch reads IQGSASPGRAKNTARIRTRRG. The span at 350 to 359 shows a compositional bias: basic residues; it reads NTARIRTRRG.

The protein belongs to the methyltransferase superfamily. RsmH family.

The protein localises to the cytoplasm. The enzyme catalyses cytidine(1402) in 16S rRNA + S-adenosyl-L-methionine = N(4)-methylcytidine(1402) in 16S rRNA + S-adenosyl-L-homocysteine + H(+). Specifically methylates the N4 position of cytidine in position 1402 (C1402) of 16S rRNA. This Bifidobacterium longum subsp. infantis (strain ATCC 15697 / DSM 20088 / JCM 1222 / NCTC 11817 / S12) protein is Ribosomal RNA small subunit methyltransferase H.